A 246-amino-acid polypeptide reads, in one-letter code: MSQTSQTRFIPHSPSPPVEWRIEPGLTPYEKALAFMEQRADAIRAGTAGEMVWLVEHPPLYTAGTSASPGDLLDPNRLPVYQTGRGGEYTYHGPGQRVAYVMLDLKRRREDVRAFVTALEDWIIASLARFNIRGERRQGRVGVWVARPEKSPLPDGTIMEDKIAAIGIRLRRWVSFHGIAVNVEPELAHFSGIVPCGISGFGVTSLVDLGLPVTMADFDVALKEAFEEVFGAAEPLFETDSLKRSA.

Residues 46–234 (GTAGEMVWLV…AFEEVFGAAE (189 aa)) form the BPL/LPL catalytic domain. Substrate contacts are provided by residues 85-92 (RGGEYTYH), 165-167 (AIG), and 178-180 (GIA). Cys-196 serves as the catalytic Acyl-thioester intermediate.

This sequence belongs to the LipB family.

Its subcellular location is the cytoplasm. It carries out the reaction octanoyl-[ACP] + L-lysyl-[protein] = N(6)-octanoyl-L-lysyl-[protein] + holo-[ACP] + H(+). It functions in the pathway protein modification; protein lipoylation via endogenous pathway; protein N(6)-(lipoyl)lysine from octanoyl-[acyl-carrier-protein]: step 1/2. Functionally, catalyzes the transfer of endogenously produced octanoic acid from octanoyl-acyl-carrier-protein onto the lipoyl domains of lipoate-dependent enzymes. Lipoyl-ACP can also act as a substrate although octanoyl-ACP is likely to be the physiological substrate. In Chelativorans sp. (strain BNC1), this protein is Octanoyltransferase.